A 196-amino-acid polypeptide reads, in one-letter code: Imidazoleglycerol-phosphate dehydratase (196 aa).

This sequence belongs to the imidazoleglycerol-phosphate dehydratase family.

Its subcellular location is the cytoplasm. The catalysed reaction is D-erythro-1-(imidazol-4-yl)glycerol 3-phosphate = 3-(imidazol-4-yl)-2-oxopropyl phosphate + H2O. It participates in amino-acid biosynthesis; L-histidine biosynthesis; L-histidine from 5-phospho-alpha-D-ribose 1-diphosphate: step 6/9. In Clostridium botulinum (strain Okra / Type B1), this protein is Imidazoleglycerol-phosphate dehydratase.